Consider the following 545-residue polypeptide: T-complex protein 1 subunit gamma (545 aa).

Met1 carries the N-acetylmethionine modification. Residues 1 to 24 (MMGHRPVLVLSQNTKRESGRKVQS) form a disordered region. A Phosphoserine modification is found at Ser11. A Glycyl lysine isopeptide (Lys-Gly) (interchain with G-Cter in SUMO2) cross-link involves residue Lys15. Residue Gly42 coordinates ADP. Gly42 contacts ATP. Residue Asp93 coordinates Mg(2+). Positions 94, 95, 96, 97, 162, and 163 each coordinate ADP. Gly94, Thr95, and Thr96 together coordinate ATP. Ser170 is modified (phosphoserine). Lys222 carries the N6-acetyllysine modification. Residues Ser243 and Ser244 each carry the phosphoserine modification. Tyr247 is subject to Phosphotyrosine. Residues Lys248 and Lys249 each participate in a glycyl lysine isopeptide (Lys-Gly) (interchain with G-Cter in SUMO2) cross-link. At Ser252 the chain carries Phosphoserine. The cysteines at positions 366 and 372 are disulfide-linked. Residue Lys381 forms a Glycyl lysine isopeptide (Lys-Gly) (interchain with G-Cter in SUMO2) linkage. An ADP-binding site is contributed by Gly411. Gly411 is an ATP binding site. 2 positions are modified to phosphothreonine: Thr430 and Thr459. ADP contacts are provided by Gly482, Glu483, Glu497, and Lys502. ATP is bound at residue Gly482. Residue Glu497 participates in ATP binding. Positions 526 to 545 (HKKKGDDQSRQGGAPDAGQE) are disordered.

Belongs to the TCP-1 chaperonin family. As to quaternary structure, component of the chaperonin-containing T-complex (TRiC), a hexadecamer composed of two identical back-to-back stacked rings enclosing a protein folding chamber. Each ring is made up of eight different subunits: TCP1/CCT1, CCT2, CCT3, CCT4, CCT5, CCT6A/CCT6, CCT7, CCT8. Interacts with PACRG. Interacts with DNAAF4. Interacts with DLEC1.

The protein resides in the cytoplasm. The enzyme catalyses ATP + H2O = ADP + phosphate + H(+). Functionally, component of the chaperonin-containing T-complex (TRiC), a molecular chaperone complex that assists the folding of actin, tubulin and other proteins upon ATP hydrolysis. The TRiC complex mediates the folding of WRAP53/TCAB1, thereby regulating telomere maintenance. As part of the TRiC complex may play a role in the assembly of BBSome, a complex involved in ciliogenesis regulating transports vesicles to the cilia. This is T-complex protein 1 subunit gamma (CCT3) from Pongo abelii (Sumatran orangutan).